The sequence spans 938 residues: Breast cancer type 2 susceptibility protein homolog (938 aa).

Basic and acidic residues-rich tracts occupy residues 320–339 (LEPSFQKEQKSSKDSNESKI) and 409–425 (NSIKRTDEEQPEKETPN). Disordered stretches follow at residues 320–359 (LEPSFQKEQKSSKDSNESKIRAPSKPSCDITEKNEGTTVL) and 409–434 (NSIKRTDEEQPEKETPNKSRSTSSHQ). 3 BRCA2 repeats span residues 537–571 (AEPEFCGFRTASNKAIPISEKMKIKTAEFMAEFQY), 638–672 (NEPQFFGFRTASKKAIEITEAMEKRGAMFLAQSRA), and 713–747 (SETEFFGFRTASNKGIVISENTKMKVAQFMSEFQA). A compositionally biased stretch (polar residues) spans 870–879 (SSTETSTSCA). The disordered stretch occupies residues 870-938 (SSTETSTSCA…RRLGLSRSRY (69 aa)). The span at 898–915 (ADRDLNRSKDCAKNRQDA) shows a compositional bias: basic and acidic residues. Basic residues predominate over residues 926 to 938 (KKSRRLGLSRSRY).

As to quaternary structure, interacts with Rad9 and spn-A/Rad51.

The protein resides in the nucleus. Involved in and required for double-strand break repair by meiotic and mitotic homologous recombination. During meiosis, has a dual role in the repair of meiotic double-stranded breaks and the efficient activation of the meiotic recombination checkpoint. The protein is Breast cancer type 2 susceptibility protein homolog of Drosophila sechellia (Fruit fly).